We begin with the raw amino-acid sequence, 99 residues long: UPF0213 protein SP_1535 (99 aa).

The GIY-YIG domain maps to 3–78; sequence HKAYMYVLEC…KRKKRPQKEE (76 aa).

This sequence belongs to the UPF0213 family.

The sequence is that of UPF0213 protein SP_1535 from Streptococcus pneumoniae serotype 4 (strain ATCC BAA-334 / TIGR4).